A 286-amino-acid chain; its full sequence is Nucleotide-binding protein PSPA7_5038 (286 aa).

Glycine 8–serine 15 is an ATP binding site. Aspartate 60 to asparagine 63 provides a ligand contact to GTP.

This sequence belongs to the RapZ-like family.

Displays ATPase and GTPase activities. The sequence is that of Nucleotide-binding protein PSPA7_5038 from Pseudomonas paraeruginosa (strain DSM 24068 / PA7) (Pseudomonas aeruginosa (strain PA7)).